A 108-amino-acid chain; its full sequence is Transcription factor AmrZ (108 aa).

In terms of biological role, functions both as a transcriptional activator and a repressor of multiple genes encoding virulence factors as well as genes involved in environmental adaptation. Represses genes involved in iron homeostasis. Modulates intracellular levels of c-di-GMP which in turn regulates swimming motility and biofilm formation. This chain is Transcription factor AmrZ, found in Pseudomonas ogarae (strain DSM 112162 / CECT 30235 / F113).